A 237-amino-acid polypeptide reads, in one-letter code: Large ribosomal subunit protein uL3 (237 aa).

2 disordered regions span residues 133 to 155 (ASHGNSITHRSHGSTGQRQDPGK) and 213 to 237 (PENAPKPAGLRAGAKAEAAATEGAE). Residues 135–150 (HGNSITHRSHGSTGQR) show a composition bias toward polar residues. Glutamine 151 carries the post-translational modification N5-methylglutamine. A compositionally biased stretch (low complexity) spans 220 to 237 (AGLRAGAKAEAAATEGAE).

It belongs to the universal ribosomal protein uL3 family. In terms of assembly, part of the 50S ribosomal subunit. Forms a cluster with proteins L14 and L19. Post-translationally, methylated by PrmB.

Its function is as follows. One of the primary rRNA binding proteins, it binds directly near the 3'-end of the 23S rRNA, where it nucleates assembly of the 50S subunit. The chain is Large ribosomal subunit protein uL3 from Brucella canis (strain ATCC 23365 / NCTC 10854 / RM-666).